Reading from the N-terminus, the 156-residue chain is Small ribosomal subunit protein uS7 (156 aa).

Belongs to the universal ribosomal protein uS7 family. Part of the 30S ribosomal subunit. Contacts proteins S9 and S11.

In terms of biological role, one of the primary rRNA binding proteins, it binds directly to 16S rRNA where it nucleates assembly of the head domain of the 30S subunit. Is located at the subunit interface close to the decoding center, probably blocks exit of the E-site tRNA. The chain is Small ribosomal subunit protein uS7 from Bartonella tribocorum (strain CIP 105476 / IBS 506).